The sequence spans 118 residues: Holo-[acyl-carrier-protein] synthase (118 aa).

Mg(2+) contacts are provided by Asp-8 and Glu-57.

The protein belongs to the P-Pant transferase superfamily. AcpS family. Mg(2+) serves as cofactor.

Its subcellular location is the cytoplasm. It carries out the reaction apo-[ACP] + CoA = holo-[ACP] + adenosine 3',5'-bisphosphate + H(+). Its function is as follows. Transfers the 4'-phosphopantetheine moiety from coenzyme A to a Ser of acyl-carrier-protein. The protein is Holo-[acyl-carrier-protein] synthase of Pediococcus pentosaceus (strain ATCC 25745 / CCUG 21536 / LMG 10740 / 183-1w).